Here is a 37-residue protein sequence, read N- to C-terminus: Large ribosomal subunit protein bL36 (37 aa).

This sequence belongs to the bacterial ribosomal protein bL36 family.

The protein is Large ribosomal subunit protein bL36 of Laribacter hongkongensis (strain HLHK9).